A 332-amino-acid polypeptide reads, in one-letter code: Phosphate acyltransferase (332 aa).

This sequence belongs to the PlsX family. In terms of assembly, homodimer. Probably interacts with PlsY.

Its subcellular location is the cytoplasm. The enzyme catalyses a fatty acyl-[ACP] + phosphate = an acyl phosphate + holo-[ACP]. Its pathway is lipid metabolism; phospholipid metabolism. Its function is as follows. Catalyzes the reversible formation of acyl-phosphate (acyl-PO(4)) from acyl-[acyl-carrier-protein] (acyl-ACP). This enzyme utilizes acyl-ACP as fatty acyl donor, but not acyl-CoA. This chain is Phosphate acyltransferase, found in Streptococcus mutans serotype c (strain ATCC 700610 / UA159).